A 125-amino-acid chain; its full sequence is uncharacterized protein (125 aa).

A helical membrane pass occupies residues 96-113; the sequence is LFMMSIVSSYVCYITVLL.

It localises to the membrane. This is an uncharacterized protein from Saccharomyces cerevisiae (strain ATCC 204508 / S288c) (Baker's yeast).